We begin with the raw amino-acid sequence, 523 residues long: Peptide chain release factor 3 (523 aa).

One can recognise a tr-type G domain in the interval 10–277 (EKRRTFAIIS…SFVDLAPAPE (268 aa)). GTP is bound by residues 19–26 (SHPDAGKT), 87–91 (DTPGH), and 141–144 (NKLD).

Belongs to the TRAFAC class translation factor GTPase superfamily. Classic translation factor GTPase family. PrfC subfamily.

The protein resides in the cytoplasm. Increases the formation of ribosomal termination complexes and stimulates activities of RF-1 and RF-2. It binds guanine nucleotides and has strong preference for UGA stop codons. It may interact directly with the ribosome. The stimulation of RF-1 and RF-2 is significantly reduced by GTP and GDP, but not by GMP. The sequence is that of Peptide chain release factor 3 from Lactobacillus acidophilus (strain ATCC 700396 / NCK56 / N2 / NCFM).